A 361-amino-acid polypeptide reads, in one-letter code: Epoxyqueuosine reductase (361 aa).

D147 serves as the catalytic Proton donor. The region spanning 193-222 (VDPAMDSEHCGRCSACLDICPTAAFVGPYR) is the 4Fe-4S ferredoxin-type domain. Positions 202, 205, 208, 212, 228, 255, 258, and 262 each coordinate [4Fe-4S] cluster.

This sequence belongs to the QueG family. In terms of assembly, monomer. It depends on cob(II)alamin as a cofactor. The cofactor is [4Fe-4S] cluster.

The protein localises to the cytoplasm. The catalysed reaction is epoxyqueuosine(34) in tRNA + AH2 = queuosine(34) in tRNA + A + H2O. Its pathway is tRNA modification; tRNA-queuosine biosynthesis. In terms of biological role, catalyzes the conversion of epoxyqueuosine (oQ) to queuosine (Q), which is a hypermodified base found in the wobble positions of tRNA(Asp), tRNA(Asn), tRNA(His) and tRNA(Tyr). This is Epoxyqueuosine reductase from Pseudomonas aeruginosa (strain ATCC 15692 / DSM 22644 / CIP 104116 / JCM 14847 / LMG 12228 / 1C / PRS 101 / PAO1).